A 457-amino-acid polypeptide reads, in one-letter code: UDP-N-acetyl-alpha-D-muramoyl-L-alanyl-L-glutamate epimerase (457 aa).

It belongs to the MurL family.

It catalyses the reaction UDP-N-acetyl-alpha-D-muramoyl-L-alanyl-L-glutamate + ATP + H2O = UDP-N-acetyl-alpha-D-muramoyl-L-alanyl-D-glutamate + AMP + diphosphate + H(+). Its pathway is cell wall biogenesis; peptidoglycan biosynthesis. Its function is as follows. Cell wall formation. Catalyzes epimerization of the terminal L-glutamate in UDP-N-acetyl-alpha-D-muramoyl-L-alanyl-L-glutamate. This chain is UDP-N-acetyl-alpha-D-muramoyl-L-alanyl-L-glutamate epimerase, found in Salinispora tropica (strain ATCC BAA-916 / DSM 44818 / JCM 13857 / NBRC 105044 / CNB-440).